The primary structure comprises 305 residues: Dermonecrotic toxin LiSicTox-alphaII1 (305 aa).

An N-terminal signal peptide occupies residues M1 to G18. Residues A19 to R26 constitute a propeptide that is removed on maturation. The active site involves H38. Mg(2+) is bound by residues E58 and D60. The active-site Nucleophile is the H74. 2 disulfide bridges follow: C78-C84 and C80-C223. D118 provides a ligand contact to Mg(2+).

Belongs to the arthropod phospholipase D family. Class II subfamily. Class IIa sub-subfamily. The cofactor is Mg(2+). Expressed by the venom gland.

The protein resides in the secreted. The catalysed reaction is an N-(acyl)-sphingosylphosphocholine = an N-(acyl)-sphingosyl-1,3-cyclic phosphate + choline. It carries out the reaction an N-(acyl)-sphingosylphosphoethanolamine = an N-(acyl)-sphingosyl-1,3-cyclic phosphate + ethanolamine. The enzyme catalyses a 1-acyl-sn-glycero-3-phosphocholine = a 1-acyl-sn-glycero-2,3-cyclic phosphate + choline. It catalyses the reaction a 1-acyl-sn-glycero-3-phosphoethanolamine = a 1-acyl-sn-glycero-2,3-cyclic phosphate + ethanolamine. Functionally, dermonecrotic toxins cleave the phosphodiester linkage between the phosphate and headgroup of certain phospholipids (sphingolipid and lysolipid substrates), forming an alcohol (often choline) and a cyclic phosphate. This toxin acts on sphingomyelin (SM) wih high activity. It may also act on ceramide phosphoethanolamine (CPE), lysophosphatidylcholine (LPC) and lysophosphatidylethanolamine (LPE), but not on lysophosphatidylserine (LPS), and lysophosphatidylglycerol (LPG). It acts by transphosphatidylation, releasing exclusively cyclic phosphate products as second products. Shows high hemolytic activity. Causes dermonecrosis, induces inflammatory response, platelet aggregation and increases vessel permeability. Shows no lethality when injected at higher dose into mice. May cause complement-dependent hemolysis as well as in a complement-independent manner. The hemolysis provoked in a complement-independent manner may be composed of several steps. The toxin may bind to erythrocyte membranes, may hydrolyze membrane phospholipids (SM and LPC) thus generating metabolism products that may cause hemolysis, probably by provoking an increase of calcium inside cells. The calcium influx may be due to the opening of L-type calcium channels, since L-type calcium channel blockers inhibit calcium influx. The polypeptide is Dermonecrotic toxin LiSicTox-alphaII1 (Loxosceles intermedia (Brown spider)).